A 435-amino-acid chain; its full sequence is Ribulose bisphosphate carboxylase large chain (435 aa).

Substrate contacts are provided by asparagine 104 and threonine 154. The active-site Proton acceptor is the lysine 156. Residue lysine 158 coordinates substrate. Mg(2+) contacts are provided by lysine 182, aspartate 184, and glutamate 185. Residue lysine 182 is modified to N6-carboxylysine. Histidine 275 acts as the Proton acceptor in catalysis. Arginine 276, histidine 308, and serine 360 together coordinate substrate.

Belongs to the RuBisCO large chain family. Type I subfamily. As to quaternary structure, heterohexadecamer of 8 large chains and 8 small chains. Requires Mg(2+) as cofactor.

The protein resides in the plastid. It is found in the chloroplast. The enzyme catalyses 2 (2R)-3-phosphoglycerate + 2 H(+) = D-ribulose 1,5-bisphosphate + CO2 + H2O. The catalysed reaction is D-ribulose 1,5-bisphosphate + O2 = 2-phosphoglycolate + (2R)-3-phosphoglycerate + 2 H(+). Its function is as follows. RuBisCO catalyzes two reactions: the carboxylation of D-ribulose 1,5-bisphosphate, the primary event in carbon dioxide fixation, as well as the oxidative fragmentation of the pentose substrate in the photorespiration process. Both reactions occur simultaneously and in competition at the same active site. The protein is Ribulose bisphosphate carboxylase large chain of Euglena pisciformis.